Consider the following 406-residue polypeptide: Glucose-6-phosphate isomerase (406 aa).

E259 serves as the catalytic Proton donor. Residues H284 and K397 contribute to the active site.

The protein belongs to the GPI family.

It localises to the cytoplasm. The catalysed reaction is alpha-D-glucose 6-phosphate = beta-D-fructose 6-phosphate. Its pathway is carbohydrate biosynthesis; gluconeogenesis. The protein operates within carbohydrate degradation; glycolysis; D-glyceraldehyde 3-phosphate and glycerone phosphate from D-glucose: step 2/4. Its function is as follows. Catalyzes the reversible isomerization of glucose-6-phosphate to fructose-6-phosphate. The protein is Glucose-6-phosphate isomerase of Campylobacter jejuni subsp. jejuni serotype O:2 (strain ATCC 700819 / NCTC 11168).